The sequence spans 197 residues: Cyclin-dependent kinase inhibitor 1B (197 aa).

Positions 1-11 (MSNVRVSNGSP) are enriched in polar residues. Residues 1–34 (MSNVRVSNGSPSLERMDARQAEHPKPSACRNLFG) form a disordered region. Phosphoserine; by UHMK1 is present on S10. Residues 14 to 25 (ERMDARQAEHPK) show a composition bias toward basic and acidic residues. The interval 51-91 (DMEEASQRKWNFDFQNHKPLEGRYEWQEVERGSLPEFYYRP) is interaction with CDK2. Position 74 is a phosphotyrosine; by SRC (Y74). A disordered region spans residues 86–197 (EFYYRPPRPP…PKKPGLRRQT (112 aa)). The residue at position 88 (Y88) is a Phosphotyrosine; by ABL, LYN, SRC and JAK2. Phosphotyrosine is present on Y89. Residues 104–113 (QESQDVSGSR) show a composition bias toward polar residues. Positions 153–169 (KRPAAEDSSSQNKRANR) match the Nuclear localization signal motif. T170 carries the phosphothreonine; by CaMK1 modification. Over residues 175–186 (SDGSPNAGTVEQ) the composition is skewed to polar residues. T187 is subject to Phosphothreonine; by PKB/AKT1, CDK1 and CDK2. At T197 the chain carries Phosphothreonine; by CaMK1, PKB/AKT1, RPS6KA1, RPS6KA3 and PIM1.

Belongs to the CDI family. Forms a ternary complex composed of CCNE1, CDK2 and CDKN1B. Interacts directly with CCNE1; the interaction is inhibited by CDK2-dependent phosphorylation on Thr-187. Interacts with COPS5, subunit of the COP9 signalosome complex; the interaction leads to CDKN1B degradation. Interacts with NUP50; the interaction leads to nuclear import and degradation of phosphorylated CDKN1B. Interacts with CCND1 and SNX6. Interacts (Thr-197-phosphorylated form) with 14-3-3 proteins, binds strongly YWHAQ, weakly YWHAE and YWHAH, but not YWHAB nor YWHAZ; the interaction with YWHAQ results in translocation to the cytoplasm. Interacts with AKT1 and LYN; the interactions lead to cytoplasmic mislocation, phosphorylation of CDKN1B and inhibition of cell cycle arrest. Forms a ternary complex with CCNA2 and CDK2; CDKN1B inhibits the kinase activity of CDK2 through conformational rearrangements. Interacts (unphosphorylated form) with CDK2. Forms a complex with CDK2 and SPDYA, but does not directly interact with SPDYA. Forms a ternary complex composed of cyclin D, CDK4 and CDKN1B. Interacts (phosphorylated on Tyr-88 and Tyr-89) with CDK4; the interaction is required for cyclin D and CDK4 complex assembly, induces nuclear translocation and activates the CDK4 kinase activity. Interacts with GRB2. Interacts with PIM1. Identified in a complex with SKP1, SKP2 and CKS1B. Interacts with UHMK1; the interaction leads to cytoplasmic mislocation, phosphorylation of CDKN1B and inhibition of cell cycle arrest. Also interacts with CDK1. Dephosphorylated on Thr-187 by PPM1H, leading to CDKN1B stability. Phosphorylated; phosphorylation occurs on serine, threonine and tyrosine residues. Phosphorylation on Ser-10 is the major site of phosphorylation in resting cells, takes place at the G(0)-G(1) phase and leads to protein stability. Phosphorylation on other sites is greatly enhanced by mitogens, growth factors, MYC and in certain cancer cell lines. The phosphorylated form found in the cytoplasm is inactivate. Phosphorylation on Thr-197 is required for interaction with 14-3-3 proteins. Phosphorylation on Thr-187, by CDK1 and CDK2 leads to protein ubiquitination and proteasomal degradation. Tyrosine phosphorylation promotes this process. Phosphorylation by PKB/AKT1 can be suppressed by LY294002, an inhibitor of the catalytic subunit of PI3K. Phosphorylation on Tyr-88 and Tyr-89 has no effect on binding CDK2, but is required for binding CDK4. Dephosphorylated on tyrosine residues by G-CSF. Dephosphorylated on Thr-187 by PPM1H, leading to CDKN1B stability. In terms of processing, ubiquitinated; in the cytoplasm by the KPC complex (composed of RNF123/KPC1 and UBAC1/KPC2) and, in the nucleus, by SCF(SKP2). The latter requires prior phosphorylation on Thr-187. Ubiquitinated; by a TRIM21-containing SCF(SKP2)-like complex; leads to its degradation. Post-translationally, subject to degradation in the lysosome. Interaction with SNX6 promotes lysosomal degradation.

The protein resides in the nucleus. The protein localises to the cytoplasm. It localises to the endosome. Important regulator of cell cycle progression. Inhibits the kinase activity of CDK2 bound to cyclin A, but has little inhibitory activity on CDK2 bound to SPDYA. Involved in G1 arrest. Potent inhibitor of cyclin E- and cyclin A-CDK2 complexes. Forms a complex with cyclin type D-CDK4 complexes and is involved in the assembly, stability, and modulation of CCND1-CDK4 complex activation. Acts either as an inhibitor or an activator of cyclin type D-CDK4 complexes depending on its phosphorylation state and/or stoichometry. The sequence is that of Cyclin-dependent kinase inhibitor 1B (Cdkn1b) from Mus musculus (Mouse).